The following is a 169-amino-acid chain: MERAIFAGGCFWCMVQPFEELDGIESVLSGYTGGHVENPTYKEVCSKTTGHTEAVEIIFNPEKISYANLVELYWAQTDPTDAFGQFEDRGDNYRPVIFYENEEQRQIAQKSKDKLQASGRFDRPIVTSIEPADTFYPAEDYHQAFYRTNPARYALSSARRHAFLEENWH.

Cysteine 10 is an active-site residue.

Belongs to the MsrA Met sulfoxide reductase family.

The catalysed reaction is L-methionyl-[protein] + [thioredoxin]-disulfide + H2O = L-methionyl-(S)-S-oxide-[protein] + [thioredoxin]-dithiol. It carries out the reaction [thioredoxin]-disulfide + L-methionine + H2O = L-methionine (S)-S-oxide + [thioredoxin]-dithiol. Has an important function as a repair enzyme for proteins that have been inactivated by oxidation. Catalyzes the reversible oxidation-reduction of methionine sulfoxide in proteins to methionine. This is Peptide methionine sulfoxide reductase MsrA from Streptococcus agalactiae serotype III (strain NEM316).